Consider the following 241-residue polypeptide: Phycocyanobilin:ferredoxin oxidoreductase (241 aa).

Belongs to the HY2 family.

The catalysed reaction is (2R,3Z)-phycocyanobilin + 4 oxidized [2Fe-2S]-[ferredoxin] = biliverdin IXalpha + 4 reduced [2Fe-2S]-[ferredoxin] + 4 H(+). In terms of biological role, catalyzes the four-electron reduction of biliverdin IX-alpha (2-electron reduction at both the A and D rings); the reaction proceeds via an isolatable 2-electron intermediate, 181,182-dihydrobiliverdin. The chain is Phycocyanobilin:ferredoxin oxidoreductase from Prochlorococcus marinus (strain MIT 9215).